A 997-amino-acid chain; its full sequence is P3N-PIPO polyprotein (997 aa).

The Peptidase S30 domain maps to 173-313; sequence IVCVDDVNNL…VLFYSDVEHY (141 aa). Active-site for P1 proteinase activity residues include glutamate 235 and serine 267. Positions 365 to 368 match the Involved in interaction with stylet and aphid transmission motif; sequence KLSC. The short motif at 621–623 is the Involved in virions binding and aphid transmission element; sequence PTK. A Peptidase C6 domain is found at 647-769; sequence MYIAKEGYCY…QSEMKHYRVG (123 aa). Residues cysteine 655 and histidine 728 each act as for helper component proteinase activity in the active site.

It belongs to the potyviridae P3N-PIPO polyprotein family. As to quaternary structure, interacts (via PIPO domain) with host PCaP1 protein; this interaction may help to anchor the movement complex to the plasma membrane from which the complex could move to the plasmodesmata. In terms of processing, potyviral RNA is expressed as two polyproteins which undergo post-translational proteolytic processing. Genome polyprotein is processed by NIa-pro, P1 and HC-pro proteinases resulting in the production of at least ten individual proteins. P3N-PIPO is cleaved by P1 and HC-pro proteinases resulting in the production of three individual proteins. The P1 proteinase and the HC-pro cleave only their respective C-termini autocatalytically.

It localises to the host cell junction. The protein localises to the host plasmodesma. The catalysed reaction is Hydrolyzes a Gly-|-Gly bond at its own C-terminus, commonly in the sequence -Tyr-Xaa-Val-Gly-|-Gly, in the processing of the potyviral polyprotein.. Functionally, required for aphid transmission and also has proteolytic activity. Only cleaves a Gly-Gly dipeptide at its own C-terminus. Interacts with virions and aphid stylets. Acts as a suppressor of RNA-mediated gene silencing, also known as post-transcriptional gene silencing (PTGS), a mechanism of plant viral defense that limits the accumulation of viral RNAs. May have RNA-binding activity. In terms of biological role, allows efficient cell to cell propagation, by bypassing the host cell wall barrier. Transports viral genome to neighboring plant cells directly through plasmosdesmata, without any budding. This is P3N-PIPO polyprotein from Citrullus lanatus (Watermelon).